Reading from the N-terminus, the 431-residue chain is Trigger factor (431 aa).

Positions glycine 165–proline 250 constitute a PPIase FKBP-type domain.

It belongs to the FKBP-type PPIase family. Tig subfamily.

The protein localises to the cytoplasm. It catalyses the reaction [protein]-peptidylproline (omega=180) = [protein]-peptidylproline (omega=0). In terms of biological role, involved in protein export. Acts as a chaperone by maintaining the newly synthesized protein in an open conformation. Functions as a peptidyl-prolyl cis-trans isomerase. In Leuconostoc mesenteroides subsp. mesenteroides (strain ATCC 8293 / DSM 20343 / BCRC 11652 / CCM 1803 / JCM 6124 / NCDO 523 / NBRC 100496 / NCIMB 8023 / NCTC 12954 / NRRL B-1118 / 37Y), this protein is Trigger factor.